The following is a 384-amino-acid chain: Succinyl-diaminopimelate desuccinylase (384 aa).

His-71 serves as a coordination point for Zn(2+). Asp-73 is an active-site residue. Asp-104 serves as a coordination point for Zn(2+). Glu-138 (proton acceptor) is an active-site residue. The Zn(2+) site is built by Glu-139, Glu-167, and His-357.

The protein belongs to the peptidase M20A family. DapE subfamily. In terms of assembly, homodimer. The cofactor is Zn(2+). It depends on Co(2+) as a cofactor.

The enzyme catalyses N-succinyl-(2S,6S)-2,6-diaminopimelate + H2O = (2S,6S)-2,6-diaminopimelate + succinate. Its pathway is amino-acid biosynthesis; L-lysine biosynthesis via DAP pathway; LL-2,6-diaminopimelate from (S)-tetrahydrodipicolinate (succinylase route): step 3/3. Catalyzes the hydrolysis of N-succinyl-L,L-diaminopimelic acid (SDAP), forming succinate and LL-2,6-diaminopimelate (DAP), an intermediate involved in the bacterial biosynthesis of lysine and meso-diaminopimelic acid, an essential component of bacterial cell walls. The protein is Succinyl-diaminopimelate desuccinylase of Blochmanniella floridana.